A 571-amino-acid chain; its full sequence is MRLHQSPPRLLVCILSVLQVSAGLSSNCRCMPGDSCWPSLNDWARFNTSIGGRLVDTQPLGQPCHDPFYTASECNELKQQWTHPELHDASSSSIMSAAVANETCDAFTPRSKPCTLGAMVRYAVNASSPDDFVQTIRFSQERNIRLVIRNTGHDYAGKSTGAGALSIWTHSLKEIDFLNYTSAHYTGPAVRMTAGIQGTDINPAAHKKGLVIVGGECATVGPVGGFTQGGGHSALSSRFGLAADQVLEWEVVDGMGRLLTASPTQNPDLYWALSGGGGGTFGVVYAVTVKTFPDFAVTGVVLQFENIDPSSNRFFEAVGHYHRHLPTYTSAGGMAIAQITNSSFLLTPLTLPAYTAAATKKLLGPFLQDLHQLNISYTLNVTESASYFQHYMKLIEPNPTQLVQNAQYGGRLLPLDLIERNNSQLTDAVQKLTADGVTFVGIGLNVSSSVTGDIWNSVLPGWRTAAMTVILTTSWPLGANLTKMKILADKMTTKWVPILTALSPESGCYMSEADPQQPDWKQTFYGRNYDSLYAIKTKYDPLQTFYATTAVGSEDWQVEAGGRLCQATRKN.

The N-terminal stretch at 1-23 is a signal peptide; sequence MRLHQSPPRLLVCILSVLQVSAG. Residues Asn47, Asn101, Asn125, Asn179, Asn341, Asn374, Asn380, Asn421, Asn445, and Asn480 are each glycosylated (N-linked (GlcNAc...) asparagine). One can recognise an FAD-binding PCMH-type domain in the interval 115–294; sequence TLGAMVRYAV…YAVTVKTFPD (180 aa).

This sequence belongs to the oxygen-dependent FAD-linked oxidoreductase family. FAD serves as cofactor.

It is found in the vacuole lumen. Its pathway is mycotoxin biosynthesis; patulin biosynthesis. Functionally, FAD-linked oxidoreductase; part of the gene cluster that mediates the biosynthesis of patulin, an acetate-derived tetraketide mycotoxin produced by several fungal species that shows antimicrobial properties against several bacteria. PatO acts with patJ in the vacuole to convert gentisyl alcohol to isoepoxydon. The pathway begins with the synthesis of 6-methylsalicylic acid by the polyketide synthase (PKS) patK via condensation of acetate and malonate units. The 6-methylsalicylic acid decarboxylase patG then catalyzes the decarboxylation of 6-methylsalicylic acid to yield m-cresol (also known as 3-methylphenol). These first reactions occur in the cytosol. The intermediate m-cresol is then transported into the endoplasmic reticulum where the cytochrome P450 monooxygenase patH converts it to m-hydroxybenzyl alcohol, which is further converted to gentisyl alcohol by the cytochrome P450 monooxygenase patI. The oxidoreductases patJ and patO further convert gentisyl alcohol to isoepoxydon in the vacuole. PatN catalyzes then the transformation of isoepoxydon into phyllostine. The cluster protein patF is responsible for the conversion from phyllostine to neopatulin whereas the alcohol dehydrogenase patD converts neopatulin to E-ascladiol. The steps between isoepoxydon and E-ascladiol occur in the cytosol, and E-ascladiol is probably secreted to the extracellular space by one of the cluster-specific transporters patC or patM. Finally, the secreted patulin synthase patE catalyzes the conversion of E-ascladiol to patulin. The polypeptide is FAD-linked oxidoreductase patO (Penicillium expansum (Blue mold rot fungus)).